The sequence spans 494 residues: PTS system cellobiose-specific EIIC component (494 aa).

The 474-residue stretch at 8–481 (MEKYLVPVAA…IITFVIWVPF (474 aa)) folds into the PTS EIIC type-3 domain. 9 helical membrane-spanning segments follow: residues 32–52 (FIGM…SAIV), 92–112 (ISAL…AFSW), 119–139 (AYGV…FAGL), 188–208 (AYFT…KLML), 227–247 (FLAI…YYII), 274–294 (IFSV…GLHG), 355–375 (AFAW…IILF), 406–426 (VVLN…SVII), and 463–483 (AIVL…PFVI).

The protein localises to the cell membrane. Functionally, the phosphoenolpyruvate-dependent sugar phosphotransferase system (PTS), a major carbohydrate active transport system, catalyzes the phosphorylation of incoming sugar substrates concomitant with their translocation across the cell membrane. Involved in cellobiose transport with PtcA and PtcB. This system can also transport lactose. The protein is PTS system cellobiose-specific EIIC component of Lactococcus lactis subsp. lactis (strain IL1403) (Streptococcus lactis).